The following is a 1649-amino-acid chain: Cortactin-binding protein 2 (1649 aa).

Residues 1-27 (MATDSASCEPDLSRAPGDAEGATAEAA) form a disordered region. Over residues 15–25 (APGDAEGATAE) the composition is skewed to low complexity. The stretch at 118-275 (RKMQERMSAQ…EQMKKGNDGK (158 aa)) forms a coiled coil. Disordered regions lie at residues 322–439 (PLSV…PGLN), 451–476 (GNANDPDQNGNNTQSPPSRDVSPTSR), and 492–604 (ALSR…LPPK). A compositionally biased stretch (polar residues) spans 330 to 342 (STGSPLVSTNTKG). Residues 395 to 416 (STPSTPSGTAPAAAQTLGAAPQ) are compositionally biased toward low complexity. A compositionally biased stretch (polar residues) spans 492 to 503 (ALSRFTSPQAGA). Asymmetric dimethylarginine is present on Arg495. 6 ANK repeats span residues 699–729 (GRPTLLQQAAAQGNVTLLSMLLNEEGLDINY), 733–762 (DSHSALYSAAKNGHTDCVRLLLNAEARVDA), 766–795 (NGFTPLCVAAAQGHFECIELLTAYNANINH), 799–828 (GGQTPLYLACKTGNKECIKLLLEAGTDRSI), 832–861 (DGWTPIHAAVDTGNVDSLKLLMYHRVPAPG), and 901–931 (EGWTAAHIAASKGFKNCLEILCRHGGLEPER). A disordered region spans residues 1438-1471 (SAAWRKVNTSPRKKPGHFSSPMWNKPDLKHEGMR). A Phosphoserine modification is found at Ser1510. A disordered region spans residues 1527-1649 (KSESDISKIA…KHEHVEKRNK (123 aa)). Residues 1528–1546 (SESDISKIADSREDLRTFD) are compositionally biased toward basic and acidic residues. 3 stretches are compositionally biased toward polar residues: residues 1547-1557 (SSRTNPVTSAP), 1571-1584 (PLSSHQTTECSNSK), and 1621-1630 (NTRQLEINNN). Residues 1631–1649 (SKEENWNVDKHEHVEKRNK) are compositionally biased toward basic and acidic residues.

As to quaternary structure, interacts with CTTN/cortactin SH3 domain. Interacts with STRN, STRN4/zinedin and MOB4/phocein; this interactions mediate the association with the STRIPAK core complex and may regulate dendritic spine distribution of the STRIPAK complex in hippocampal neurons. Activation of glutamate receptors weakens the interaction with STRN and STRN4.

The protein localises to the cytoplasm. The protein resides in the cell cortex. Its subcellular location is the cell projection. It localises to the dendritic spine. In terms of biological role, regulates the dendritic spine distribution of CTTN/cortactin in hippocampal neurons, and thus controls dendritic spinogenesis and dendritic spine maintenance. Associates with the striatin-interacting phosphatase and kinase (STRIPAK) core complex to regulate dendritic spine distribution of the STRIPAK complex in hippocampal neurons. The protein is Cortactin-binding protein 2 (Cttnbp2) of Rattus norvegicus (Rat).